We begin with the raw amino-acid sequence, 342 residues long: Aristolochene synthase (342 aa).

Positions 115, 244, 248, and 252 each coordinate Mg(2+). (2E,6E)-farnesyl diphosphate is bound by residues R340 and Y341.

This sequence belongs to the terpene synthase family. As to quaternary structure, homodimer. The cofactor is Mg(2+).

The catalysed reaction is (2E,6E)-farnesyl diphosphate = (+)-aristolochene + diphosphate. The protein operates within sesquiterpene biosynthesis; aristolochene biosynthesis; aristolochene from farnesyl diphosphate: step 1/1. Functionally, aristolochene synthase; part of the gene cluster that mediates the biosynthesis of PR-toxin, a bicyclic sesquiterpene belonging to the eremophilane class and acting as a mycotoxin. The first step of the pathway is catalyzed by the aristolochene synthase which performs the cyclization of trans,trans-farnesyl diphosphate (FPP) to the bicyclic sesquiterpene aristolochene. Following the formation of aristolochene, the non-oxygenated aristolochene is converted to the trioxygenated intermediate eremofortin B, via 7-epi-neopetasone. This conversion appears to involve three enzymes, a hydroxysterol oxidase-like enzyme, the quinone-oxidase prx3 that forms the quinone-type-structure in the bicyclic nucleus of aristolochene with the C8-oxo group and the C-3 hydroxyl group, and the P450 monooxygenase ORF6 that introduces the epoxide at the double bond between carbons 1 and 2. No monoxy or dioxy-intermediates have been reported to be released to the broth, so these three early oxidative reactions may be coupled together. Eremofortin B is further oxidized by another P450 monooxygenase, that introduces a second epoxide between carbons 7 and 11 prior to acetylation to eremofortin A by the acetyltransferase ORF8. The second epoxidation may be performed by a second P450 monooxygenase. After the acetylation step, eremofortin A is converted to eremofortin C and then to PR-toxin. First the conversion of eremofortin A to eremofortin C proceeds by oxidation of the side chain of the molecule at C-12 and is catalyzed by the short-chain oxidoreductase prx1. The cytochrome P450 monooxygenase ORF5 also plays a role in this step. The primary alcohol formed at C-12 is finally oxidized by the short-chain alcohol dehydrogenase prx4 that forms PR-toxin. This is Aristolochene synthase from Penicillium roqueforti (strain FM164).